We begin with the raw amino-acid sequence, 496 residues long: Nitric oxide synthase, inducible (496 aa).

Residues Cys-6, Glu-32, and Gln-36 each coordinate FMN. In terms of domain architecture, FAD-binding FR-type spans 101–341 (KNLFTMRLRS…VRSVSGFQLP (241 aa)). Arg-121 contacts NADP(+). 6 residues coordinate FAD: His-143, Arg-277, Tyr-279, Ser-280, Thr-295, and Ala-297. An NADP(+)-binding site is contributed by Thr-300. Residues Tyr-301, Val-314, Cys-315, and Ser-316 each contribute to the FAD site. NADP(+) is bound by residues Thr-355, Arg-388, Ser-417, Arg-418, Lys-424, Tyr-426, Gln-428, and Asp-461.

It belongs to the NOS family. In terms of assembly, homodimer. Interacts with NHERF1. Interacts with GAPDH; induced by oxidatively-modified low-densitity lipoprotein (LDL(ox)). Interacts with S100A8 and S100A9 to form the iNOS-S100A8/9 transnitrosylase complex. Interacts with SPSB1, SPSB2 and SPSB4. Interacts with ELOC and CUL5 in the presence of SPSB1 or SPSB2 or SPSB4. Forms a complex with ASL, ASS1 and HSP90AA1; the complex regulates cell-autonomous L-arginine synthesis and citrulline recycling while channeling extracellular L-arginine to nitric oxide synthesis pathway. The cofactor is heme b. FAD is required as a cofactor. Requires FMN as cofactor. It depends on (6R)-L-erythro-5,6,7,8-tetrahydrobiopterin as a cofactor. Polyubiquitinated; mediated by SPSB1, SPSB2 and SPSB4, leading to proteasomal degradation.

It localises to the cytoplasm. The protein localises to the cytosol. It catalyses the reaction 2 L-arginine + 3 NADPH + 4 O2 + H(+) = 2 L-citrulline + 2 nitric oxide + 3 NADP(+) + 4 H2O. Not stimulated by calcium/calmodulin. Produces nitric oxide (NO) which is a messenger molecule with diverse functions throughout the body. In macrophages, NO mediates tumoricidal and bactericidal actions. Also has nitrosylase activity and mediates cysteine S-nitrosylation of cytoplasmic target proteins such PTGS2/COX2. As component of the iNOS-S100A8/9 transnitrosylase complex involved in the selective inflammatory stimulus-dependent S-nitrosylation of GAPDH implicated in regulation of the GAIT complex activity and probably multiple targets including ANXA5, EZR, MSN and VIM. Involved in inflammation, enhances the synthesis of pro-inflammatory mediators such as IL6 and IL8. This is Nitric oxide synthase, inducible (NOS2) from Oryctolagus cuniculus (Rabbit).